Here is a 466-residue protein sequence, read N- to C-terminus: MSNGNIVQCIGPVVDIQFPRDKMPNIYDALTLVESGEKSFAEKGLTFEVQQQIGDGVVRAIAMGASDGLRRGMEVKSTGKPISVPVGPATLGRIMDVLGRPIDDAGPIATEERRAIHQPAPKFDELSPSVDLLETGIKVIDLVCPFAKGGKVGLFGGAGVGKTVNMMELINNIAKQHSGLSVFAGVGERTREGNDFYHEMKESNVIDKVAMVFGQMNEPPGNRLRVALTGLTMAEAFRDEGRDILFFVDNIYRYTLAGTEVSALLGRMPSAVGYQPTLAEEMGKLQERITSTKTGSVTSIQAVYVPADDLTDPSPATTFLHLDSTVVLSRDIAALGIYPAVDPLDSTSRQLDPQVVGQEHYEVARDVQMTLQRYKELRDIIAILGMDELSPEDKLAVSRARKIQRFLSQPFHVAEVFTGSPGKYVPLKETIRGFKMICSGELDHLPEQAFYMVGSIDEAIEKAKKL.

An ATP-binding site is contributed by 156-163 (GGAGVGKT).

This sequence belongs to the ATPase alpha/beta chains family. F-type ATPases have 2 components, CF(1) - the catalytic core - and CF(0) - the membrane proton channel. CF(1) has five subunits: alpha(3), beta(3), gamma(1), delta(1), epsilon(1). CF(0) has three main subunits: a(1), b(2) and c(9-12). The alpha and beta chains form an alternating ring which encloses part of the gamma chain. CF(1) is attached to CF(0) by a central stalk formed by the gamma and epsilon chains, while a peripheral stalk is formed by the delta and b chains.

The protein localises to the cell membrane. It carries out the reaction ATP + H2O + 4 H(+)(in) = ADP + phosphate + 5 H(+)(out). Functionally, produces ATP from ADP in the presence of a proton gradient across the membrane. The catalytic sites are hosted primarily by the beta subunits. In Polynucleobacter asymbioticus (strain DSM 18221 / CIP 109841 / QLW-P1DMWA-1) (Polynucleobacter necessarius subsp. asymbioticus), this protein is ATP synthase subunit beta.